A 116-amino-acid polypeptide reads, in one-letter code: Peptidyl-tRNA hydrolase (116 aa).

The protein belongs to the PTH2 family.

It localises to the cytoplasm. The enzyme catalyses an N-acyl-L-alpha-aminoacyl-tRNA + H2O = an N-acyl-L-amino acid + a tRNA + H(+). Its function is as follows. The natural substrate for this enzyme may be peptidyl-tRNAs which drop off the ribosome during protein synthesis. The sequence is that of Peptidyl-tRNA hydrolase from Methanococcus vannielii (strain ATCC 35089 / DSM 1224 / JCM 13029 / OCM 148 / SB).